The sequence spans 463 residues: ATP synthase subunit beta 1 (463 aa).

Residue 152 to 159 (GGAGVGKT) participates in ATP binding.

This sequence belongs to the ATPase alpha/beta chains family. As to quaternary structure, F-type ATPases have 2 components, CF(1) - the catalytic core - and CF(0) - the membrane proton channel. CF(1) has five subunits: alpha(3), beta(3), gamma(1), delta(1), epsilon(1). CF(0) has three main subunits: a(1), b(2) and c(9-12). The alpha and beta chains form an alternating ring which encloses part of the gamma chain. CF(1) is attached to CF(0) by a central stalk formed by the gamma and epsilon chains, while a peripheral stalk is formed by the delta and b chains.

Its subcellular location is the cell inner membrane. The enzyme catalyses ATP + H2O + 4 H(+)(in) = ADP + phosphate + 5 H(+)(out). In terms of biological role, produces ATP from ADP in the presence of a proton gradient across the membrane. The catalytic sites are hosted primarily by the beta subunits. This chain is ATP synthase subunit beta 1, found in Shewanella frigidimarina (strain NCIMB 400).